Here is a 154-residue protein sequence, read N- to C-terminus: MGLSDGEWHLVLNVWGKVETDLAGHGQEVLIRLFKSHPETLEKFDKFKHLKSEDDMRRSEDLRKHGNTVLTALGGILKKKGHHEAELKPLAQSHATKHKIPIKYLEFISEAIIHVLHSKHPAEFGADAQAAMKKALELFRNDIAAKYKELGFHG.

Positions 2-148 (GLSDGEWHLV…FRNDIAAKYK (147 aa)) constitute a Globin domain. Residue Ser-4 is modified to Phosphoserine. Residue His-65 participates in nitrite binding. His-65 lines the O2 pocket. Position 68 is a phosphothreonine (Thr-68). His-94 contacts heme b.

It belongs to the globin family. In terms of assembly, monomeric.

The protein resides in the cytoplasm. Its subcellular location is the sarcoplasm. The catalysed reaction is Fe(III)-heme b-[protein] + nitric oxide + H2O = Fe(II)-heme b-[protein] + nitrite + 2 H(+). It catalyses the reaction H2O2 + AH2 = A + 2 H2O. In terms of biological role, monomeric heme protein which primary function is to store oxygen and facilitate its diffusion within muscle tissues. Reversibly binds oxygen through a pentacoordinated heme iron and enables its timely and efficient release as needed during periods of heightened demand. Depending on the oxidative conditions of tissues and cells, and in addition to its ability to bind oxygen, it also has a nitrite reductase activity whereby it regulates the production of bioactive nitric oxide. Under stress conditions, like hypoxia and anoxia, it also protects cells against reactive oxygen species thanks to its pseudoperoxidase activity. The polypeptide is Myoglobin (MB) (Halichoerus grypus (Gray seal)).